The following is a 145-amino-acid chain: uncharacterized protein (145 aa).

Positions 1 to 26 are cleaved as a signal peptide; that stretch reads MAILLPLKSILPWCCITFSFLLSSSG.

This is an uncharacterized protein from Saccharomyces cerevisiae (strain ATCC 204508 / S288c) (Baker's yeast).